Reading from the N-terminus, the 405-residue chain is Serine--glyoxylate aminotransferase (405 aa).

N6-(pyridoxal phosphate)lysine is present on lysine 196.

The protein belongs to the class-V pyridoxal-phosphate-dependent aminotransferase family. Pyridoxal 5'-phosphate is required as a cofactor.

It catalyses the reaction glyoxylate + L-serine = 3-hydroxypyruvate + glycine. The protein operates within one-carbon metabolism; formaldehyde assimilation via serine pathway. In Hyphomicrobium methylovorum, this protein is Serine--glyoxylate aminotransferase (sgaA).